The sequence spans 343 residues: Heat-inducible transcription repressor HrcA (343 aa).

The protein belongs to the HrcA family.

Its function is as follows. Negative regulator of class I heat shock genes (grpE-dnaK-dnaJ and groELS operons). Prevents heat-shock induction of these operons. This is Heat-inducible transcription repressor HrcA from Mycoplasma genitalium (strain ATCC 33530 / DSM 19775 / NCTC 10195 / G37) (Mycoplasmoides genitalium).